Here is a 376-residue protein sequence, read N- to C-terminus: Nucleoside diphosphate kinase homolog 7 (376 aa).

Residues 3 to 91 form the DM10 domain; the sequence is HSERFVFIAE…YTARQLGSRK (89 aa).

Belongs to the NDK family. As to quaternary structure, component of sperm flagellar doublet microtubules. Component of the gamma-tubulin ring complex. Post-translationally, undergoes autophosphorylation. As to expression, expressed in airway epithelial cells.

Its subcellular location is the cytoplasm. It is found in the cytoskeleton. It localises to the microtubule organizing center. The protein localises to the centrosome. The protein resides in the nucleus. Its subcellular location is the spindle. It is found in the cilium axoneme. It localises to the flagellum axoneme. The protein localises to the cell projection. The protein resides in the cilium. Functionally, possesses an intrinsic kinase activity. Displays 3'-5' exonuclease activity with a preference for single-stranded DNA. Does not seem to have nucleoside diphosphate kinase activity. Functional component of the gamma-tubulin ring complex, implicated in the regulation of the microtubule-nucleating activity of the gamma-tubulin ring complex in centrosomes, in a kinase activity-dependent manner. Part of the dynein-decorated doublet microtubules (DMTs) in cilia axoneme, which is required for motile cilia beating. This chain is Nucleoside diphosphate kinase homolog 7, found in Homo sapiens (Human).